A 141-amino-acid polypeptide reads, in one-letter code: General odorant-binding protein 57b (141 aa).

An N-terminal signal peptide occupies residues M1–A22. Cystine bridges form between C39/C77, C73/C120, and C111/C129.

Belongs to the PBP/GOBP family.

Functionally, present in the aqueous fluid surrounding olfactory sensory dendrites and are thought to aid in the capture and transport of hydrophobic odorants into and through this fluid. This is General odorant-binding protein 57b from Drosophila melanogaster (Fruit fly).